The sequence spans 184 residues: Lactoylglutathione lyase (184 aa).

A2 is modified (N-acetylalanine). Residues C19 and C20 are joined by a disulfide bond. The region spanning L31–P177 is the VOC domain. Positions 34 and 38 each coordinate substrate. Q34 serves as a coordination point for Zn(2+). Position 100 (E100) interacts with Zn(2+). N104 provides a ligand contact to substrate. Residue T107 is modified to Phosphothreonine. Residues R123 and H127 each coordinate substrate. H127 lines the Zn(2+) pocket. C139 is subject to S-glutathionyl cysteine. K148 bears the N6-acetyllysine; alternate mark. K148 is subject to N6-succinyllysine; alternate. K157 to M158 lines the substrate pocket. E173 provides a ligand contact to Zn(2+). The active-site Proton donor/acceptor is E173.

The protein belongs to the glyoxalase I family. As to quaternary structure, homodimer. Requires Zn(2+) as cofactor. In terms of processing, glutathionylation at Cys-139 inhibits enzyme activity. Post-translationally, phosphorylated at Thr-107 in the presence of CaMK2. However, this is a consensus site for phosphorylation by CK2 so phosphorylation may be mediated by CK2 rather than CaMK2. Phosphorylation is induced by TNF and suppresses the TNF-induced transcriptional activity of NF-kappa-B. Exists in a nitric oxide (NO)-modified form. The exact nature of the modification is unknown, but it suppresses the TNF-induced transcriptional activity of NF-kappa-B.

It catalyses the reaction (R)-S-lactoylglutathione = methylglyoxal + glutathione. It functions in the pathway secondary metabolite metabolism; methylglyoxal degradation; (R)-lactate from methylglyoxal: step 1/2. Catalyzes the conversion of hemimercaptal, formed from methylglyoxal and glutathione, to S-lactoylglutathione. Involved in the regulation of TNF-induced transcriptional activity of NF-kappa-B. Required for normal osteoclastogenesis. This chain is Lactoylglutathione lyase (Glo1), found in Rattus norvegicus (Rat).